The following is a 350-amino-acid chain: UDP-glucose 4-epimerase (350 aa).

7 to 38 (KILVTGSAGFIGTHTVVQLLNNGFNVSIIDNF) provides a ligand contact to NAD(+). Ser-133 is a substrate binding site. The active-site Proton acceptor is the Tyr-157.

This sequence belongs to the NAD(P)-dependent epimerase/dehydratase family. Requires NAD(+) as cofactor.

The enzyme catalyses UDP-alpha-D-glucose = UDP-alpha-D-galactose. It functions in the pathway carbohydrate metabolism; galactose metabolism. The sequence is that of UDP-glucose 4-epimerase (GALE) from Pisum sativum (Garden pea).